Consider the following 311-residue polypeptide: Nudix hydrolase 9 (311 aa).

Positions 131 to 298 (SSPLGNGAVI…GFALYELMLQ (168 aa)) constitute a Nudix hydrolase domain. A Nudix box motif is present at residues 192–213 (LNKKVTQEMFDSIICEVVEETG). The Mg(2+) site is built by Glu207 and Glu211.

It belongs to the Nudix hydrolase family. Mg(2+) serves as cofactor. The cofactor is Mn(2+). Expressed in roots, stems and leaves.

Its function is as follows. Probably mediates the hydrolysis of some nucleoside diphosphate derivatives. The sequence is that of Nudix hydrolase 9 (NUDT9) from Arabidopsis thaliana (Mouse-ear cress).